The primary structure comprises 1939 residues: Myosin-4 (1939 aa).

Residues Asp33 to Pro82 form the Myosin N-terminal SH3-like domain. At Ser36 the chain carries Phosphoserine. Phosphothreonine is present on residues Thr64 and Thr69. Residue Ser79 is modified to Phosphoserine. The Myosin motor domain occupies Asp86–Asp782. N6,N6,N6-trimethyllysine is present on Lys130. Gly179–Thr186 provides a ligand contact to ATP. A Phosphotyrosine modification is found at Tyr389. Phosphothreonine is present on Thr391. Position 392 is a phosphoserine (Ser392). Thr419 is subject to Phosphothreonine. Position 424 is a phosphotyrosine (Tyr424). Ser625 carries the phosphoserine modification. Residues Leu659–Glu681 are actin-binding. His757 is modified (pros-methylhistidine). Positions Lys761 to Gly775 are actin-binding. Thr776 carries the post-translational modification Phosphothreonine. In terms of domain architecture, IQ spans Leu785–Ser814. Residues Leu843–Glu1939 adopt a coiled-coil conformation. Ser1092 and Ser1096 each carry phosphoserine. 2 disordered regions span residues Ala1128–Leu1147 and Arg1153–Glu1172. Residues Ser1162 and Ser1237 each carry the phosphoserine modification. Position 1241 is a phosphothreonine (Thr1241). Residue Ser1243 is modified to Phosphoserine. A Phosphothreonine modification is found at Thr1255. A Phosphoserine modification is found at Ser1261. Thr1265 is modified (phosphothreonine). Residue Ser1278 is modified to Phosphoserine. Phosphothreonine is present on Thr1286. Residues Ser1288, Ser1292, Ser1303, Ser1306, and Ser1413 each carry the phosphoserine modification. Tyr1464 carries the phosphotyrosine modification. A Phosphothreonine modification is found at Thr1467. Position 1474 is a phosphoserine (Ser1474). Tyr1492 is modified (phosphotyrosine). Position 1495 is a phosphoserine (Ser1495). At Thr1501 the chain carries Phosphothreonine. Ser1514 carries the phosphoserine modification. At Thr1517 the chain carries Phosphothreonine. A phosphoserine mark is found at Ser1542, Ser1547, Ser1554, Ser1574, Ser1600, Ser1603, Ser1714, and Ser1726. Thr1730 and Thr1736 each carry phosphothreonine. Ser1739 bears the Phosphoserine mark.

The protein belongs to the TRAFAC class myosin-kinesin ATPase superfamily. Myosin family. As to quaternary structure, muscle myosin is a hexameric protein that consists of 2 heavy chain subunits (MHC), 2 alkali light chain subunits (MLC) and 2 regulatory light chain subunits (MLC-2).

It localises to the cytoplasm. The protein localises to the myofibril. In terms of biological role, muscle contraction. This chain is Myosin-4, found in Rattus norvegicus (Rat).